A 376-amino-acid chain; its full sequence is Succinyl-diaminopimelate desuccinylase (376 aa).

Zn(2+) is bound at residue His-66. The active site involves Asp-68. Asp-99 is a binding site for Zn(2+). Catalysis depends on Glu-133, which acts as the Proton acceptor. Zn(2+)-binding residues include Glu-134, Glu-162, and His-349.

Belongs to the peptidase M20A family. DapE subfamily. In terms of assembly, homodimer. Zn(2+) serves as cofactor. Co(2+) is required as a cofactor.

The enzyme catalyses N-succinyl-(2S,6S)-2,6-diaminopimelate + H2O = (2S,6S)-2,6-diaminopimelate + succinate. It participates in amino-acid biosynthesis; L-lysine biosynthesis via DAP pathway; LL-2,6-diaminopimelate from (S)-tetrahydrodipicolinate (succinylase route): step 3/3. In terms of biological role, catalyzes the hydrolysis of N-succinyl-L,L-diaminopimelic acid (SDAP), forming succinate and LL-2,6-diaminopimelate (DAP), an intermediate involved in the bacterial biosynthesis of lysine and meso-diaminopimelic acid, an essential component of bacterial cell walls. The protein is Succinyl-diaminopimelate desuccinylase of Ruthia magnifica subsp. Calyptogena magnifica.